The chain runs to 157 residues: MRIGHGFDVHKFGGEGPVIIGGVAIPYEQGLIAHSDGDVALHAVCDALLGAIGAGDIGRHFPDTDAEWKGADSRFLLRDVYSKVKDKGYRLGNLDVTIIAQAPKMAPYIDAMCQAIAEDLETDIGNVNVKATTSERLGFTGRKEGIACEAVVLINAQ.

A divalent metal cation contacts are provided by Asp8 and His10. Residues 8–10 (DVH) and 34–35 (HS) each bind 4-CDP-2-C-methyl-D-erythritol 2-phosphate. His42 contacts a divalent metal cation. 4-CDP-2-C-methyl-D-erythritol 2-phosphate contacts are provided by residues 56 to 58 (DIG), 61 to 65 (FPDTD), 100 to 106 (AQAPKMA), 132 to 135 (TTSE), Phe139, and Arg142.

The protein belongs to the IspF family. As to quaternary structure, homotrimer. A divalent metal cation serves as cofactor.

It carries out the reaction 4-CDP-2-C-methyl-D-erythritol 2-phosphate = 2-C-methyl-D-erythritol 2,4-cyclic diphosphate + CMP. It functions in the pathway isoprenoid biosynthesis; isopentenyl diphosphate biosynthesis via DXP pathway; isopentenyl diphosphate from 1-deoxy-D-xylulose 5-phosphate: step 4/6. Its function is as follows. Involved in the biosynthesis of isopentenyl diphosphate (IPP) and dimethylallyl diphosphate (DMAPP), two major building blocks of isoprenoid compounds. Catalyzes the conversion of 4-diphosphocytidyl-2-C-methyl-D-erythritol 2-phosphate (CDP-ME2P) to 2-C-methyl-D-erythritol 2,4-cyclodiphosphate (ME-CPP) with a corresponding release of cytidine 5-monophosphate (CMP). This chain is 2-C-methyl-D-erythritol 2,4-cyclodiphosphate synthase, found in Photobacterium profundum (strain SS9).